The primary structure comprises 536 residues: MSSYGAALRIHTFGESHGSAVGCIIDGLPPRLPLSVEDVQPQLNRRRPGQGPLSTQRREKDRVNILSGVEDGYTLGTPLAMLVWNEDRRPQEYHALATVPRPGHGDFTYHAKYHIHAKSGGGRSSARETLARVAAGAVVEKWLGMHYGTSFTAWVCQVGDVSVPRSLRRKWERQPPTRQDVDRLGVVRVSPDGTTFLDANNRLYDERGEELVEEEDKARRRLLFGVDNPTPGETVIETRCPCPSTAVRMAVKINQTRSLGDSIGGCISGAIVRPPLGLGEPCFDKVEAELAKAMMSLPATKGFEIGQGFASVTLRGSEHNDRFIPFERASCSFSESAASTIKHERDGCSAATLSRERASDGRTTSRHEEEVERGRERIQRDTLHVTGVDQQNGNSEDSVRYTSKSEASITRLSGNAASGGAPVCRIPLGEGVRIRCGSNNAGGTLAGITSGENIFFRVAFKPVSSIGLEQETADFAGEMNQLAVKGRHDPCVLPRAPPLVESMAALVIGDLCLRQRAREGPHPLLVLPQHSGCPSC.

Residue His-17 is part of the active site. Residues 37-59 (EDVQPQLNRRRPGQGPLSTQRRE) form a disordered region. The active site involves His-104. The segment at 344-377 (ERDGCSAATLSRERASDGRTTSRHEEEVERGRER) is disordered. The span at 354-377 (SRERASDGRTTSRHEEEVERGRER) shows a compositional bias: basic and acidic residues. Asp-489 is an active-site residue.

Belongs to the chorismate synthase family. It depends on FMNH2 as a cofactor.

It catalyses the reaction 5-O-(1-carboxyvinyl)-3-phosphoshikimate = chorismate + phosphate. The enzyme catalyses FMNH2 + NADP(+) = FMN + NADPH + 2 H(+). It participates in metabolic intermediate biosynthesis; chorismate biosynthesis; chorismate from D-erythrose 4-phosphate and phosphoenolpyruvate: step 7/7. Functionally, bifunctional chorismate synthase and flavin reductase. Catalyzes the conversion of 5-enolpyruvylshikimate 3-phosphate (EPSP) to form chorismate. Acts also as a flavin reductase (FR) able to generate reduced flavin mononucleotide in the presence of NADPH. The sequence is that of Chorismate synthase (AROC) from Toxoplasma gondii.